We begin with the raw amino-acid sequence, 189 residues long: Cell division protein SepF (189 aa).

Disordered regions lie at residues 1–75 (MEGQ…GLPG) and 155–174 (STPS…SPTP).

It belongs to the SepF family. In terms of assembly, homodimer. Interacts with FtsZ.

It is found in the cytoplasm. Its function is as follows. Cell division protein that is part of the divisome complex and is recruited early to the Z-ring. Probably stimulates Z-ring formation, perhaps through the cross-linking of FtsZ protofilaments. Its function overlaps with FtsA. The polypeptide is Cell division protein SepF (Synechococcus sp. (strain JA-3-3Ab) (Cyanobacteria bacterium Yellowstone A-Prime)).